Here is a 209-residue protein sequence, read N- to C-terminus: MTKGILGRKVGMTQIFTKNGILVPVTVIEATPNVVLQVKTNESDGYEAVQVGYQDMREVLSNKPAKGHAAKAKTSPKRFIREIRDVELKDYEVGSEITVDSFSEGDVVDVTGTTRGHGTQGNIKRWGQSRGPETHGSRYHRIPGSMGSIINRVPKGKKLPGHMGGKKVTVQNLVIEKVVPEKNVLLVKGNVPGAKNSLIFVKSAAKAAK.

The segment covering 112 to 122 has biased composition (polar residues); sequence GTTRGHGTQGN. Residues 112 to 146 are disordered; the sequence is GTTRGHGTQGNIKRWGQSRGPETHGSRYHRIPGSM.

This sequence belongs to the universal ribosomal protein uL3 family. In terms of assembly, part of the 50S ribosomal subunit. Forms a cluster with proteins L14 and L19.

Its function is as follows. One of the primary rRNA binding proteins, it binds directly near the 3'-end of the 23S rRNA, where it nucleates assembly of the 50S subunit. This is Large ribosomal subunit protein uL3 from Lactobacillus gasseri (strain ATCC 33323 / DSM 20243 / BCRC 14619 / CIP 102991 / JCM 1131 / KCTC 3163 / NCIMB 11718 / NCTC 13722 / AM63).